A 184-amino-acid polypeptide reads, in one-letter code: NEDD8-conjugating enzyme Ubc12 (184 aa).

One can recognise a UBC core domain in the interval 30–175; the sequence is AGELRLHKDI…VRRAMTGGYV (146 aa). Residue C113 is the Glycyl thioester intermediate of the active site.

This sequence belongs to the ubiquitin-conjugating enzyme family. UBC12 subfamily. In terms of assembly, interacts with RBX1. In terms of tissue distribution, expressed in shoot, root and floral meristems, and in vascular tissues of leaves.

It participates in protein modification; protein neddylation. In terms of biological role, accepts the ubiquitin-like protein NEDD8/RUB1 from the ECR1-AXR1 E1 complex and catalyzes its covalent attachment to other proteins. The polypeptide is NEDD8-conjugating enzyme Ubc12 (RCE1) (Arabidopsis thaliana (Mouse-ear cress)).